Consider the following 353-residue polypeptide: ATP-dependent kinase YFH7 (353 aa).

An ATP-binding site is contributed by 31–39 (GPPGSGKST).

The protein belongs to the YFH7 family.

In terms of biological role, ATP-dependent kinase that could be involved in endoplasmic reticulum membrane assembly. The protein is ATP-dependent kinase YFH7 (YFH7) of Kluyveromyces lactis (strain ATCC 8585 / CBS 2359 / DSM 70799 / NBRC 1267 / NRRL Y-1140 / WM37) (Yeast).